The chain runs to 345 residues: UDP-3-O-acylglucosamine N-acyltransferase (345 aa).

His-237 (proton acceptor) is an active-site residue.

Belongs to the transferase hexapeptide repeat family. LpxD subfamily. In terms of assembly, homotrimer.

The catalysed reaction is a UDP-3-O-[(3R)-3-hydroxyacyl]-alpha-D-glucosamine + a (3R)-hydroxyacyl-[ACP] = a UDP-2-N,3-O-bis[(3R)-3-hydroxyacyl]-alpha-D-glucosamine + holo-[ACP] + H(+). Its pathway is bacterial outer membrane biogenesis; LPS lipid A biosynthesis. Catalyzes the N-acylation of UDP-3-O-acylglucosamine using 3-hydroxyacyl-ACP as the acyl donor. Is involved in the biosynthesis of lipid A, a phosphorylated glycolipid that anchors the lipopolysaccharide to the outer membrane of the cell. This chain is UDP-3-O-acylglucosamine N-acyltransferase, found in Geobacter sp. (strain M21).